The chain runs to 756 residues: Cellulose synthase catalytic subunit [UDP-forming] (756 aa).

4 helical membrane passes run 27–47, 49–69, 106–126, and 167–187; these read ASYI…TVTL, NNEQ…VGRG, GILG…LFLS, and LTVL…VYIL. The catalytic subdomain A stretch occupies residues 147-242; the sequence is DWPTVDIFIP…YILILDCDHI (96 aa). D189 is a catalytic residue. Residues D238 and D240 each contribute to the substrate site. Residues 319–379 form a catalytic subdomain B region; it reads EAIESIGGFA…GQRMRWARGM (61 aa). The active site involves D335. 5 helical membrane passes run 409 to 429, 432 to 452, 470 to 490, 517 to 537, and 551 to 571; these read FFFA…LFAG, IIAA…FHSI, VYET…LLFP, NIIF…ELIV, and LLNC…IAVG. The PilZ domain maps to 576–681; the sequence is QVRYNHRVEA…ERDIVRFVFG (106 aa). The interval 721–756 is disordered; the sequence is NSRPKKKPLALPVERREPTTIHSGQTQEGKISRAAS. The span at 740–756 shows a compositional bias: polar residues; that stretch reads TIHSGQTQEGKISRAAS.

Belongs to the glycosyltransferase 2 family. Requires Mg(2+) as cofactor.

The protein resides in the cell inner membrane. It carries out the reaction [(1-&gt;4)-beta-D-glucosyl](n) + UDP-alpha-D-glucose = [(1-&gt;4)-beta-D-glucosyl](n+1) + UDP + H(+). Its pathway is glycan metabolism; bacterial cellulose biosynthesis. Activated by bis-(3'-5') cyclic diguanylic acid (c-di-GMP). Functionally, catalytic subunit of cellulose synthase. It polymerizes uridine 5'-diphosphate glucose to cellulose. The thick cellulosic mats generated by this enzyme probably provide a specialized protective environment to the bacterium. The protein is Cellulose synthase catalytic subunit [UDP-forming] (bcsA) of Komagataeibacter sucrofermentans (strain ATCC 700178 / DSM 15973 / CECT 7291 / JCM 9730 / LMG 18788 / BPR 2001) (Acetobacter xylinus subsp. sucrofermentans).